A 235-amino-acid chain; its full sequence is Phosphoribosylaminoimidazole-succinocarboxamide synthase (235 aa).

The protein belongs to the SAICAR synthetase family.

It catalyses the reaction 5-amino-1-(5-phospho-D-ribosyl)imidazole-4-carboxylate + L-aspartate + ATP = (2S)-2-[5-amino-1-(5-phospho-beta-D-ribosyl)imidazole-4-carboxamido]succinate + ADP + phosphate + 2 H(+). Its pathway is purine metabolism; IMP biosynthesis via de novo pathway; 5-amino-1-(5-phospho-D-ribosyl)imidazole-4-carboxamide from 5-amino-1-(5-phospho-D-ribosyl)imidazole-4-carboxylate: step 1/2. This is Phosphoribosylaminoimidazole-succinocarboxamide synthase from Lachnoclostridium phytofermentans (strain ATCC 700394 / DSM 18823 / ISDg) (Clostridium phytofermentans).